Consider the following 357-residue polypeptide: Peptide chain release factor 1 (357 aa).

Q234 is modified (N5-methylglutamine).

This sequence belongs to the prokaryotic/mitochondrial release factor family. Methylated by PrmC. Methylation increases the termination efficiency of RF1.

The protein resides in the cytoplasm. Its function is as follows. Peptide chain release factor 1 directs the termination of translation in response to the peptide chain termination codons UAG and UAA. The polypeptide is Peptide chain release factor 1 (Lactococcus lactis subsp. cremoris (strain SK11)).